The chain runs to 143 residues: Ribosomal RNA large subunit methyltransferase H (143 aa).

Residues glycine 95 and 111–116 (FSDLTF) each bind S-adenosyl-L-methionine.

The protein belongs to the RNA methyltransferase RlmH family. In terms of assembly, homodimer.

It is found in the cytoplasm. It carries out the reaction pseudouridine(1915) in 23S rRNA + S-adenosyl-L-methionine = N(3)-methylpseudouridine(1915) in 23S rRNA + S-adenosyl-L-homocysteine + H(+). Functionally, specifically methylates the pseudouridine at position 1915 (m3Psi1915) in 23S rRNA. The protein is Ribosomal RNA large subunit methyltransferase H of Metamycoplasma arthritidis (strain 158L3-1) (Mycoplasma arthritidis).